We begin with the raw amino-acid sequence, 198 residues long: HTH-type transcriptional regulator BetI (198 aa).

One can recognise an HTH tetR-type domain in the interval 8-68; the sequence is PLRRRELIDA…ATMRHLLREL (61 aa). The H-T-H motif DNA-binding region spans 31–50; that stretch reads TVAQIAHEAGVSPALAHHYF.

The protein operates within amine and polyamine biosynthesis; betaine biosynthesis via choline pathway [regulation]. Functionally, repressor involved in the biosynthesis of the osmoprotectant glycine betaine. It represses transcription of the choline transporter BetT and the genes of BetAB involved in the synthesis of glycine betaine. The polypeptide is HTH-type transcriptional regulator BetI (Brucella canis (strain ATCC 23365 / NCTC 10854 / RM-666)).